Here is a 317-residue protein sequence, read N- to C-terminus: ADIPOR-like receptor IZH2 (317 aa).

The Cytoplasmic portion of the chain corresponds to 1-78 (MSTLLERTKS…TFKSLFYLHN (78 aa)). The helical transmembrane segment at 79–99 (ESVNIYSHLIPALGFFTVLLL) threads the bilayer. At 100 to 110 (DKSTIKVFATT) the chain is on the extracellular side. The helical transmembrane segment at 111-131 (TWLDHMVIDLFYSGAFACLIL) threads the bilayer. At 132-153 (SSSFHCLKSHSLRIATLGNKLD) the chain is on the cytoplasmic side. The chain crosses the membrane as a helical span at residues 154-174 (YLGICILIVTSMVSILYYGYF). Residues 175 to 176 (EK) are Extracellular-facing. A helical membrane pass occupies residues 177 to 197 (FSLFCLFALITVSFGIACSIV). Over 198–212 (SLKDKFRKREWRPYR) the chain is Cytoplasmic. A helical transmembrane segment spans residues 213 to 233 (AGLFVCFGLSSIIPIFSGLYC). Topologically, residues 234–242 (YSFSEIWTQ) are extracellular. Residues 243–263 (IQLFWVLLGGVLYIIGAVLYG) traverse the membrane as a helical segment. Over 264–276 (MRFPEKICPGKFD) the chain is Cytoplasmic. A helical membrane pass occupies residues 277 to 297 (IWGHSHQLFHFLVVIAALCHL). Residues 298–317 (RGLLNSYELVHIKMENGIVS) are Extracellular-facing.

Belongs to the ADIPOR family.

It localises to the membrane. Probable receptor, which is involved in metabolic pathways that regulate lipid metabolism such as fatty acid oxidation. This Saccharomyces cerevisiae (strain ATCC 204508 / S288c) (Baker's yeast) protein is ADIPOR-like receptor IZH2 (IZH2).